The chain runs to 388 residues: Succinate--CoA ligase [ADP-forming] subunit beta (388 aa).

An ATP-grasp domain is found at 9–244 (KQLFAEYGLP…PSQEDEREAH (236 aa)). ATP-binding positions include Lys46, 53 to 55 (GRG), Glu99, Thr102, and Glu107. Mg(2+) contacts are provided by Asn199 and Asp213. Substrate contacts are provided by residues Asn264 and 321 to 323 (GIV).

The protein belongs to the succinate/malate CoA ligase beta subunit family. In terms of assembly, heterotetramer of two alpha and two beta subunits. The cofactor is Mg(2+).

It catalyses the reaction succinate + ATP + CoA = succinyl-CoA + ADP + phosphate. The catalysed reaction is GTP + succinate + CoA = succinyl-CoA + GDP + phosphate. It functions in the pathway carbohydrate metabolism; tricarboxylic acid cycle; succinate from succinyl-CoA (ligase route): step 1/1. Its function is as follows. Succinyl-CoA synthetase functions in the citric acid cycle (TCA), coupling the hydrolysis of succinyl-CoA to the synthesis of either ATP or GTP and thus represents the only step of substrate-level phosphorylation in the TCA. The beta subunit provides nucleotide specificity of the enzyme and binds the substrate succinate, while the binding sites for coenzyme A and phosphate are found in the alpha subunit. The protein is Succinate--CoA ligase [ADP-forming] subunit beta of Marinomonas sp. (strain MWYL1).